A 298-amino-acid polypeptide reads, in one-letter code: Aspartate carbamoyltransferase catalytic subunit (298 aa).

Carbamoyl phosphate is bound by residues Arg54 and Thr55. Lys82 serves as a coordination point for L-aspartate. Carbamoyl phosphate contacts are provided by Arg104, His132, and Gln135. Residues Arg165 and Arg218 each coordinate L-aspartate. Carbamoyl phosphate contacts are provided by Gly260 and Pro261.

This sequence belongs to the aspartate/ornithine carbamoyltransferase superfamily. ATCase family. Heterododecamer (2C3:3R2) of six catalytic PyrB chains organized as two trimers (C3), and six regulatory PyrI chains organized as three dimers (R2).

It catalyses the reaction carbamoyl phosphate + L-aspartate = N-carbamoyl-L-aspartate + phosphate + H(+). Its pathway is pyrimidine metabolism; UMP biosynthesis via de novo pathway; (S)-dihydroorotate from bicarbonate: step 2/3. In terms of biological role, catalyzes the condensation of carbamoyl phosphate and aspartate to form carbamoyl aspartate and inorganic phosphate, the committed step in the de novo pyrimidine nucleotide biosynthesis pathway. The sequence is that of Aspartate carbamoyltransferase catalytic subunit from Wolbachia sp. subsp. Brugia malayi (strain TRS).